Reading from the N-terminus, the 204-residue chain is MGAYKYMQELWRKKQSDVMRFLLRVRCWQYRQLSALHRAPRPTRPDKARRLGYKAKQGYVIYRIRVRRGGRKRPVPKGATYGKPVHHGVNQIKFARSLQSVAEERAGRHCGGLRVLSSYWVGEDSTYKFFEVVLIDTFHKAIRRDPDTQWITKAVHKHREMRGLTSAGKKSRGLGKGHKFHLTIGGSRRAAWKRRNTLQLHRYR.

This sequence belongs to the eukaryotic ribosomal protein eL15 family. As to quaternary structure, component of the large ribosomal subunit.

It is found in the cytoplasm. In terms of biological role, component of the large ribosomal subunit. The ribosome is a large ribonucleoprotein complex responsible for the synthesis of proteins in the cell. The sequence is that of Large ribosomal subunit protein eL15 (rpl15) from Cyprinus carpio (Common carp).